The chain runs to 353 residues: D-alanine--D-alanine ligase (353 aa).

One can recognise an ATP-grasp domain in the interval 141–349 (KAAFAAAGLP…LEELVSQLVI (209 aa)). ATP is bound at residue 176-231 (EAKLKYPCFVKPANLGSSVGISKAQNRNELLIGLDKAASLDRRIVVEQGVSARELE). The Mg(2+) site is built by D302, E316, and N318.

It belongs to the D-alanine--D-alanine ligase family. Requires Mg(2+) as cofactor. Mn(2+) serves as cofactor.

It is found in the cytoplasm. It carries out the reaction 2 D-alanine + ATP = D-alanyl-D-alanine + ADP + phosphate + H(+). It functions in the pathway cell wall biogenesis; peptidoglycan biosynthesis. In terms of biological role, cell wall formation. This Prochlorococcus marinus (strain MIT 9313) protein is D-alanine--D-alanine ligase.